The sequence spans 507 residues: Tyrosine protein-kinase src-2 (507 aa).

Basic and acidic residues predominate over residues 1–10; that stretch reads MGSCIGKEDP. Positions 1-52 are disordered; sequence MGSCIGKEDPPPGATSPVHTSSTLGRESLPSHPRIPSIGPIAASSSGNTIDK. G2 is lipidated: N-myristoyl glycine. Residues 35–47 show a composition bias toward low complexity; it reads IPSIGPIAASSSG. An SH3 domain is found at 57 to 118; that stretch reads SQSANFVALF…PSNYVAREKS (62 aa). Residues 124–216 form the SH2 domain; sequence WYFGKMRRID…GLCVNLGAPC (93 aa). A Protein kinase domain is found at 240-494; sequence VRLIRQIGAG…LQWKLEDLFN (255 aa). Residues 246–254 and K268 each bind ATP; that span reads IGAGQFGEV. The Proton acceptor role is filled by D358. Phosphotyrosine is present on Y500.

Belongs to the protein kinase superfamily. Tyr protein kinase family. SRC subfamily. Mg(2+) serves as cofactor. The cofactor is Mn(2+). May be phosphorylated on Tyr-500 by csk-1. Expressed in vulva, cells around anus and pharyngeal muscles.

It catalyses the reaction L-tyrosyl-[protein] + ATP = O-phospho-L-tyrosyl-[protein] + ADP + H(+). May be inhibited by csk-1-mediated phosphorylation at Tyr-500. Its function is as follows. Non-receptor tyrosine-protein kinase which may play a role in larval and pharynx development. Unlike src-1, does not play a role in embryonic development. The protein is Tyrosine protein-kinase src-2 of Caenorhabditis elegans.